A 502-amino-acid chain; its full sequence is Glycerate kinase (502 aa).

The protein belongs to the glycerate kinase type-2 family.

Its subcellular location is the cytoplasm. It catalyses the reaction (R)-glycerate + ATP = (2R)-3-phosphoglycerate + ADP + H(+). This is Glycerate kinase (glyctk) from Danio rerio (Zebrafish).